Reading from the N-terminus, the 398-residue chain is Dual-specificity RNA methyltransferase RlmN (398 aa).

The Proton acceptor role is filled by Glu119. The region spanning 125–364 is the Radical SAM core domain; the sequence is EADRATLCVS…TIVRKTRGDD (240 aa). Cysteines 132 and 369 form a disulfide. Residues Cys139, Cys143, and Cys146 each contribute to the [4Fe-4S] cluster site. Residues 193–194, Ser225, 247–249, and Asn326 contribute to the S-adenosyl-L-methionine site; these read GE and SLH. Residue Cys369 is the S-methylcysteine intermediate of the active site.

Belongs to the radical SAM superfamily. RlmN family. [4Fe-4S] cluster is required as a cofactor.

It localises to the cytoplasm. It carries out the reaction adenosine(2503) in 23S rRNA + 2 reduced [2Fe-2S]-[ferredoxin] + 2 S-adenosyl-L-methionine = 2-methyladenosine(2503) in 23S rRNA + 5'-deoxyadenosine + L-methionine + 2 oxidized [2Fe-2S]-[ferredoxin] + S-adenosyl-L-homocysteine. The enzyme catalyses adenosine(37) in tRNA + 2 reduced [2Fe-2S]-[ferredoxin] + 2 S-adenosyl-L-methionine = 2-methyladenosine(37) in tRNA + 5'-deoxyadenosine + L-methionine + 2 oxidized [2Fe-2S]-[ferredoxin] + S-adenosyl-L-homocysteine. Functionally, specifically methylates position 2 of adenine 2503 in 23S rRNA and position 2 of adenine 37 in tRNAs. m2A2503 modification seems to play a crucial role in the proofreading step occurring at the peptidyl transferase center and thus would serve to optimize ribosomal fidelity. The protein is Dual-specificity RNA methyltransferase RlmN of Yersinia pseudotuberculosis serotype O:3 (strain YPIII).